A 553-amino-acid polypeptide reads, in one-letter code: Hydroxylamine reductase (553 aa).

C3, C6, C18, and C25 together coordinate [2Fe-2S] cluster. Hybrid [4Fe-2O-2S] cluster-binding residues include H252, E276, C320, C408, C436, C461, E495, and K497. C408 bears the Cysteine persulfide mark.

It belongs to the HCP family. Requires [2Fe-2S] cluster as cofactor. Hybrid [4Fe-2O-2S] cluster is required as a cofactor.

It is found in the cytoplasm. The enzyme catalyses A + NH4(+) + H2O = hydroxylamine + AH2 + H(+). In terms of biological role, catalyzes the reduction of hydroxylamine to form NH(3) and H(2)O. This is Hydroxylamine reductase from Tolumonas auensis (strain DSM 9187 / NBRC 110442 / TA 4).